The primary structure comprises 213 residues: BREX protein BrxA (213 aa).

The protein belongs to the BrxA family.

Its function is as follows. BREX systems (bacteriophage exclusion) provide immunity against bacteriophage. A probably non-essential part of a type 1 BREX system which protects against dsDNA phage. This system allows phage adsorption but prevents phage DNA replication, without degradation of the phage DNA. Methylation of bacterial DNA by PglX guides self/non-self discrimination. When the brxA-brxB-brxC-pglX-pglZ-brxL genes are transformed into a susceptible E.coli strain (BW25113) they confer very high resistance to infection by bacteriophage VR7 and VpaE1, about 100-fold protection against lambda, T5 and T7 and no protection against RNA phage Qbeta, ssDNA phage M13 or dSDNA phage T4 and VR5. Glycosylated phage DNA is not susceptible to BREX. The BREX system does not confer resistance to lysogenic lambda phage, i.e. prophage that are integrated into the chromosomal DNA and then induced to form phage. The polypeptide is BREX protein BrxA (Escherichia coli O9:H4 (strain HS)).